Reading from the N-terminus, the 144-residue chain is Cell division protein SepF (144 aa).

Belongs to the SepF family. As to quaternary structure, homodimer. Interacts with FtsZ.

It is found in the cytoplasm. Functionally, cell division protein that is part of the divisome complex and is recruited early to the Z-ring. Probably stimulates Z-ring formation, perhaps through the cross-linking of FtsZ protofilaments. Its function overlaps with FtsA. This is Cell division protein SepF from Oceanobacillus iheyensis (strain DSM 14371 / CIP 107618 / JCM 11309 / KCTC 3954 / HTE831).